A 442-amino-acid chain; its full sequence is Histidinol dehydrogenase (442 aa).

Tyr-132, Gln-194, and Asn-217 together coordinate NAD(+). Substrate is bound by residues Ser-243, Gln-265, and His-268. Residues Gln-265 and His-268 each coordinate Zn(2+). Residues Glu-332 and His-333 each act as proton acceptor in the active site. Residues His-333, Asp-366, Glu-420, and His-425 each contribute to the substrate site. Asp-366 provides a ligand contact to Zn(2+). Residue His-425 coordinates Zn(2+).

This sequence belongs to the histidinol dehydrogenase family. It depends on Zn(2+) as a cofactor.

It catalyses the reaction L-histidinol + 2 NAD(+) + H2O = L-histidine + 2 NADH + 3 H(+). Its pathway is amino-acid biosynthesis; L-histidine biosynthesis; L-histidine from 5-phospho-alpha-D-ribose 1-diphosphate: step 9/9. In terms of biological role, catalyzes the sequential NAD-dependent oxidations of L-histidinol to L-histidinaldehyde and then to L-histidine. In Idiomarina loihiensis (strain ATCC BAA-735 / DSM 15497 / L2-TR), this protein is Histidinol dehydrogenase.